The following is a 155-amino-acid chain: Protein SREK1IP1 (155 aa).

The segment at 13–30 adopts a CCHC-type zinc-finger fold; it reads AGCKKCGYPGHLTFECRN. Positions 44-155 are disordered; sequence VSSTSSEDSD…TPNSSEFSRK (112 aa). Phosphoserine is present on Ser-52. A compositionally biased stretch (basic and acidic residues) spans 66–84; that stretch reads QEKRINEEEEKKKEKSKEK. Positions 85-94 are enriched in basic residues; sequence IKLKKKRKRS. Residues Ser-96 and Ser-97 each carry the phosphoserine modification. A compositionally biased stretch (basic residues) spans 107 to 142; that stretch reads QKKQKYQKKEKKKEKKSKSKKGKHHKKEKKKRKKEK. Thr-146 is subject to Phosphothreonine. Residues 146–155 show a composition bias toward polar residues; sequence TPNSSEFSRK.

As to quaternary structure, interacts with SREK1/SFRS12.

In terms of biological role, possible splicing regulator involved in the control of cellular survival. In Homo sapiens (Human), this protein is Protein SREK1IP1 (SREK1IP1).